Reading from the N-terminus, the 311-residue chain is DNA replication terminus site-binding protein (311 aa).

The protein belongs to the Tus family.

It is found in the cytoplasm. Its function is as follows. Trans-acting protein required for termination of DNA replication. Binds to DNA replication terminator sequences (terA to terF) to prevent the passage of replication forks. The termination efficiency will be affected by the affinity of this protein for the terminator sequence. The polypeptide is DNA replication terminus site-binding protein (Yersinia pestis).